A 645-amino-acid polypeptide reads, in one-letter code: Threonine--tRNA ligase (645 aa).

A TGS domain is found at 1-63 (MEQINIQFPD…ETDGSIEIVT (63 aa)). Residues 242-540 (DHRKIGKELE…LTEETKGAFP (299 aa)) form a catalytic region. The Zn(2+) site is built by cysteine 336, histidine 387, and histidine 517.

Belongs to the class-II aminoacyl-tRNA synthetase family. In terms of assembly, homodimer. Requires Zn(2+) as cofactor.

The protein localises to the cytoplasm. It carries out the reaction tRNA(Thr) + L-threonine + ATP = L-threonyl-tRNA(Thr) + AMP + diphosphate + H(+). Catalyzes the attachment of threonine to tRNA(Thr) in a two-step reaction: L-threonine is first activated by ATP to form Thr-AMP and then transferred to the acceptor end of tRNA(Thr). Also edits incorrectly charged L-seryl-tRNA(Thr). The chain is Threonine--tRNA ligase from Staphylococcus aureus (strain JH1).